Reading from the N-terminus, the 106-residue chain is Large ribosomal subunit protein eL42 (106 aa).

This sequence belongs to the eukaryotic ribosomal protein eL42 family.

This is Large ribosomal subunit protein eL42 (RPL44) from Schwanniomyces occidentalis (Yeast).